A 342-amino-acid polypeptide reads, in one-letter code: S-adenosylmethionine:tRNA ribosyltransferase-isomerase (342 aa).

The protein belongs to the QueA family. As to quaternary structure, monomer.

Its subcellular location is the cytoplasm. The enzyme catalyses 7-aminomethyl-7-carbaguanosine(34) in tRNA + S-adenosyl-L-methionine = epoxyqueuosine(34) in tRNA + adenine + L-methionine + 2 H(+). It functions in the pathway tRNA modification; tRNA-queuosine biosynthesis. In terms of biological role, transfers and isomerizes the ribose moiety from AdoMet to the 7-aminomethyl group of 7-deazaguanine (preQ1-tRNA) to give epoxyqueuosine (oQ-tRNA). The chain is S-adenosylmethionine:tRNA ribosyltransferase-isomerase from Streptococcus pneumoniae (strain ATCC BAA-255 / R6).